A 391-amino-acid chain; its full sequence is E1B 55 kDa protein (391 aa).

At S387 the chain carries Phosphoserine.

The protein belongs to the adenoviridae E1B 55 kDa protein family. In terms of assembly, interacts with host PML-4 and PML-5; this interaction promotes efficient subnuclear targeting of E1B-55K to PML nuclear bodies. Interacts with E4-ORF3 protein. Interacts with E4-ORF6 protein.

It localises to the host nucleus. The protein localises to the host cytoplasm. Its function is as follows. Plays a major role to prevent cellular inhibition of viral genome replication. Assembles an SCF-like E3 ubiquitin ligase complex based on the cellular proteins ELOB, ELOC, CUL5 and RBX1, in cooperation with viral E4orf6. This viral RING-type ligase ubiquitinates cellular substrates and targets them to proteasomal degradation: TP53/p53, LIG4, MRE11-RAD50-NBS1 (MRN) complex, ITGA3, DAXX and BLM. E1B-55K probably acts as the substrate-specific adapter of the SCF-like E3 ubiquitin ligase complex. Degradation of host TP53/p53 activity is essential for preventing E1A-induced TP53 accumulation that would otherwise lead to cell apoptosis and growth arrest. E1B-55K also inactivates TP53 transcription-factor activity by binding its transactivation domain. E1B-55K also functions as a SUMO1 E3 ligase for TP53 which causes the latter to be sequestered in promyelocytic leukemia (PML) nuclear bodies thereby contributing to maximal inhibition of TP53 function. This chain is E1B 55 kDa protein, found in Tree shrew adenovirus serotype 1 (TSAdV-1).